The sequence spans 82 residues: Large ribosomal subunit protein uL23 (82 aa).

The protein belongs to the universal ribosomal protein uL23 family. As to quaternary structure, part of the 50S ribosomal subunit. Contacts protein L29.

Functionally, binds to 23S rRNA. One of the proteins that surrounds the polypeptide exit tunnel on the outside of the ribosome. The polypeptide is Large ribosomal subunit protein uL23 (Methanosarcina acetivorans (strain ATCC 35395 / DSM 2834 / JCM 12185 / C2A)).